Consider the following 1269-residue polypeptide: Histone-lysine N-methyltransferase SETDB1 (1269 aa).

Residues 9–63 (KELGISMDDLRELIDRELEKIEFVKQRKAQLLEMEQLVKQKEAEVDHVDKLFDNA) adopt a coiled-coil conformation. 2 disordered regions span residues 85-121 (YKES…GEAV) and 153-188 (QKKS…DMSK). Positions 103–112 (EIPDEDDDDV) are enriched in acidic residues. Low complexity predominate over residues 164-177 (SSHPSSPTSSVGGS). Tudor domains lie at 250-312 (ENLT…RPWS) and 340-395 (VLLK…MFSM). Polar residues predominate over residues 396 to 414 (KTSNASTQEKQQAGQQRTR). The segment at 396-516 (KTSNASTQEK…FQSNQSVQPV (121 aa)) is disordered. Over residues 462 to 476 (DSQQAQSKKQVAKKS) the composition is skewed to low complexity. Polar residues predominate over residues 486–497 (SGQSSPIPTESV). Residues 620 to 691 (HRGKNPLLVP…EMFCLDPYVL (72 aa)) form the MBD domain. Residues 753 to 826 (VGCDCTDGCR…MCNNRLVQHG (74 aa)) form the Pre-SET domain. The Zn(2+) site is built by Cys755, Cys757, Cys761, Cys767, Cys769, Cys807, Cys811, Cys813, and Cys818. In terms of domain architecture, SET spans 829–1244 (VRLQLFKTQN…AGTELTWDYN (416 aa)). S-adenosyl-L-methionine-binding positions include 839–841 (KGW), Asp877, and Tyr879. The segment at 894-1139 (EGYESDAKSS…VAASAGPVKR (246 aa)) is disordered. The span at 919-932 (SGSEDQEESNDSSD) shows a compositional bias: acidic residues. Basic and acidic residues-rich tracts occupy residues 968 to 989 (ASKD…ETSK) and 1021 to 1033 (ETDK…EASK). A compositionally biased stretch (low complexity) spans 1078 to 1094 (TEEVLTLSSSSDSEVGS). Over residues 1106–1120 (ATANDSDDIQTISSG) the composition is skewed to polar residues. S-adenosyl-L-methionine-binding positions include Arg1198 and 1201-1202 (NH). Positions 1204, 1257, 1259, and 1264 each coordinate Zn(2+). One can recognise a Post-SET domain in the interval 1253-1269 (KKLLCCCGSTECRGRLL).

Belongs to the class V-like SAM-binding methyltransferase superfamily. Histone-lysine methyltransferase family. Suvar3-9 subfamily.

It localises to the nucleus. The protein resides in the chromosome. It carries out the reaction N(6),N(6)-dimethyl-L-lysyl(9)-[histone H3] + S-adenosyl-L-methionine = N(6),N(6),N(6)-trimethyl-L-lysyl(9)-[histone H3] + S-adenosyl-L-homocysteine + H(+). Its function is as follows. Histone methyltransferase that specifically trimethylates 'Lys-9' of histone H3. H3 'Lys-9' trimethylation represents a specific tag for epigenetic transcriptional repression by recruiting HP1 (CBX1, CBX3 and/or CBX5) proteins to methylated histones. Mainly functions in euchromatin regions, thereby playing a central role in the silencing of euchromatic genes. H3 'Lys-9' trimethylation is coordinated with DNA methylation. Plays a role in promoter hypermethylation and transcriptional silencing of tumor suppressor genes (TSGs) or other tumor-related genes. Also required to maintain a transcriptionally repressive state of genes in undifferentiated embryonic stem cells (ESCs). Associates at promoter regions of tumor suppressor genes (TSGs) leading to their gene silencing. This is Histone-lysine N-methyltransferase SETDB1 (setdb1) from Xenopus laevis (African clawed frog).